Consider the following 107-residue polypeptide: UPF0473 protein LACR_0139 (107 aa).

The protein belongs to the UPF0473 family.

This is UPF0473 protein LACR_0139 from Lactococcus lactis subsp. cremoris (strain SK11).